Reading from the N-terminus, the 313-residue chain is Undecaprenyl-diphosphatase (313 aa).

A run of 6 helical transmembrane segments spans residues 121–141 (YRIG…GFLF), 152–172 (LWLV…AEHY), 187–207 (GLVM…RSGA), 225–245 (FSFL…LPDA), 259–279 (QLLV…AWLL), and 290–310 (FVGY…AGVI).

The protein belongs to the UppP family.

It is found in the cell membrane. It carries out the reaction di-trans,octa-cis-undecaprenyl diphosphate + H2O = di-trans,octa-cis-undecaprenyl phosphate + phosphate + H(+). Catalyzes the dephosphorylation of undecaprenyl diphosphate (UPP). Confers resistance to bacitracin. The sequence is that of Undecaprenyl-diphosphatase from Nocardia farcinica (strain IFM 10152).